The chain runs to 51 residues: Lantibiotic flavucin (51 aa).

The propeptide occupies 1–20; the sequence is MSDFTLDFAEGDAADTVSPQ. The segment at residues 23 to 27 is a cross-link (lanthionine (Ser-Cys)); sequence SKSLC. 3 cross-links (beta-methyllanthionine (Thr-Cys)) span residues 28 to 31, 33 to 38, and 42 to 45; these read TPGC, TGWMMC, and TKGC.

The protein belongs to the type A lantibiotic family. Maturation of lantibiotics involves the enzymatic conversion of Thr, and Ser into dehydrated AA and the formation of thioether bonds with cysteine. This is followed by membrane translocation and cleavage of the modified precursor.

With respect to regulation, antimicrobial activity depends on the dehydration degree and integrity of flavucin. Functionally, lanthionine-containing peptide antibiotic (lantibiotic) active on certain Gram-positive bacteria. The bactericidal activity of lantibiotics is based on depolarization of energized bacterial cytoplasmic membranes, initiated by the formation of aqueous transmembrane pores. Flavucin has high antimicrobial activity against several pathogenic bacteria such as S.aureus, E.faecalis, E.faecium and L.monocytogenes. Is also active against the Gram-negative P.aeruginosa. The sequence is that of Lantibiotic flavucin from Corynebacterium lipophiloflavum (strain ATCC 700352 / DSM 44291 / CCUG 37336 / JCM 10383 / DMMZ 1944).